Reading from the N-terminus, the 1130-residue chain is Transmembrane channel-like protein 3 (1130 aa).

At 1-148 (MKTSKASQRY…ASYFIFLRWL (148 aa)) the chain is on the cytoplasmic side. A helical membrane pass occupies residues 149 to 169 (FGINIVLTVMTGAFVVLPELI). At 170-192 (AGQPFGSTASKTIPREQITSAQD) the chain is on the extracellular side. Residues 193-213 (LDTVWSLGGYLQYSVLFYGYY) form a helical membrane-spanning segment. Topologically, residues 214–225 (GRERRIGRAGYR) are cytoplasmic. Residues 226-246 (LPLAYFLVGMAVFAYSFIVLL) traverse the membrane as a helical segment. At 247–319 (KRMAKNSRTS…KNMAVTVCLR (73 aa)) the chain is on the extracellular side. Asparagine 264 is a glycosylation site (N-linked (GlcNAc...) asparagine). Residues 320–340 (IIANILVLLSLAGSIYLIYFV) form a helical membrane-spanning segment. Topologically, residues 341-361 (VDRSQKLEQSKKELTLWEKNE) are cytoplasmic. The chain crosses the membrane as a helical span at residues 362 to 382 (VSVVVSLVTMLAPSAFDLIAA). Residues 383–393 (LEMYHPRTTLR) are Extracellular-facing. Residues 394 to 414 (FQLARVLVLYLGNLYSLIIAL) form a helical membrane-spanning segment. Residues 415–509 (LDKVNSMNIE…CWETYVGQEM (95 aa)) lie on the Cytoplasmic side of the membrane. A helical transmembrane segment spans residues 510 to 530 (LKLSVIDMLFTVASILLIDFF). Residues 531-570 (RGLFVRYLSDYWCWDLESKFPEYGEFKIAENVLHLVYNQG) lie on the Extracellular side of the membrane. The chain crosses the membrane as a helical span at residues 571 to 591 (MIWMGAFFSPCLPAFNVLKLI). At 592–619 (GLMYLRSWAVLTCNVPHQQVFRASRSNN) the chain is on the cytoplasmic side. The chain crosses the membrane as a helical span at residues 620-640 (FYLAMLLFMLFLCMLPTIFAI). Residues 641 to 680 (VHYKPSLNCGPFSGQEKIYDIVSETIENDFPTWFHAVVGH) lie on the Extracellular side of the membrane. The chain crosses the membrane as a helical span at residues 681-701 (ISSPVVILPAVLLLFMLIYYL). The Cytoplasmic portion of the chain corresponds to 702–1130 (QSIARSLKLS…DLNDLICSNV (429 aa)). Disordered stretches follow at residues 742 to 774 (DARQ…EESS), 819 to 893 (RSLP…FQPI), 999 to 1019 (SSCF…KYQR), 1033 to 1059 (QLER…LKAR), and 1097 to 1116 (QGRF…KSRQ). Residues 747 to 767 (GSATEAESSENSKPKTLQARI) are compositionally biased toward polar residues. Residues 840–850 (SRSRPEQDTNR) show a composition bias toward basic and acidic residues. A compositionally biased stretch (polar residues) spans 856 to 876 (CSSTSNLHKNRSCSSVTQTQP). 2 stretches are compositionally biased toward basic and acidic residues: residues 878-890 (KDVR…RKDF) and 1006-1017 (DRSENNTRDPKY). The span at 1097–1106 (QGRFPRSASQ) shows a compositional bias: polar residues.

Belongs to the TMC family. In terms of tissue distribution, detected in most neuronal organs and also in some non-neuronal tissues.

Its subcellular location is the membrane. Its function is as follows. Probable component of an ion channel. Molecular function hasn't been characterized yet. The sequence is that of Transmembrane channel-like protein 3 from Mus musculus (Mouse).